A 40-amino-acid chain; its full sequence is Natriuretic peptide PaNP-b (40 aa).

The cysteines at positions 9 and 25 are disulfide-linked. A propeptide spanning residues 36–40 is cleaved from the precursor; the sequence is IPGGS.

It belongs to the natriuretic peptide family. Expressed by the venom gland.

The protein resides in the secreted. Snake venom natriuretic peptide that targets both NPR1 and NPR2. Exhibits hypotensive and vasodepressor activities. This chain is Natriuretic peptide PaNP-b, found in Pseudechis australis (Mulga snake).